Consider the following 299-residue polypeptide: Probable lipid kinase YegS (299 aa).

Positions 2–133 (ANFPASLLIL…IDMARVNDKT (132 aa)) constitute a DAGKc domain. ATP-binding positions include T40, 66–72 (GDGTINE), and T95. Mg(2+) is bound by residues L215, D218, and L220. E271 (proton acceptor) is an active-site residue.

Belongs to the diacylglycerol/lipid kinase family. YegS lipid kinase subfamily. Requires Mg(2+) as cofactor. Ca(2+) is required as a cofactor.

It localises to the cytoplasm. Functionally, probably phosphorylates lipids; the in vivo substrate is unknown. The sequence is that of Probable lipid kinase YegS from Salmonella paratyphi A (strain ATCC 9150 / SARB42).